A 1220-amino-acid chain; its full sequence is DNA-directed RNA polymerase subunit beta' (1220 aa).

Cys60, Cys62, Cys75, and Cys78 together coordinate Zn(2+). The Mg(2+) site is built by Asp449, Asp451, and Asp453. Zn(2+)-binding residues include Cys818, Cys892, Cys899, and Cys902.

Belongs to the RNA polymerase beta' chain family. In terms of assembly, the RNAP catalytic core consists of 2 alpha, 1 beta, 1 beta' and 1 omega subunit. When a sigma factor is associated with the core the holoenzyme is formed, which can initiate transcription. Mg(2+) serves as cofactor. It depends on Zn(2+) as a cofactor.

It catalyses the reaction RNA(n) + a ribonucleoside 5'-triphosphate = RNA(n+1) + diphosphate. Its function is as follows. DNA-dependent RNA polymerase catalyzes the transcription of DNA into RNA using the four ribonucleoside triphosphates as substrates. The protein is DNA-directed RNA polymerase subunit beta' of Lacticaseibacillus paracasei (strain ATCC 334 / BCRC 17002 / CCUG 31169 / CIP 107868 / KCTC 3260 / NRRL B-441) (Lactobacillus paracasei).